A 270-amino-acid chain; its full sequence is Glutamate racemase (270 aa).

Residues 14–15 (DS) and 46–47 (YG) each bind substrate. The active-site Proton donor/acceptor is Cys-77. 78 to 79 (NT) contributes to the substrate binding site. The Proton donor/acceptor role is filled by Cys-189. 190–191 (TH) is a binding site for substrate.

Belongs to the aspartate/glutamate racemases family.

The enzyme catalyses L-glutamate = D-glutamate. It participates in cell wall biogenesis; peptidoglycan biosynthesis. In terms of biological role, provides the (R)-glutamate required for cell wall biosynthesis. The chain is Glutamate racemase from Neisseria meningitidis serogroup C.